The chain runs to 103 residues: Small ribosomal subunit protein uS10c (103 aa).

Belongs to the universal ribosomal protein uS10 family. In terms of assembly, part of the 30S ribosomal subunit.

Its subcellular location is the plastid. It localises to the chloroplast. Involved in the binding of tRNA to the ribosomes. The protein is Small ribosomal subunit protein uS10c of Emiliania huxleyi (Coccolithophore).